Reading from the N-terminus, the 367-residue chain is Metacaspase-1 (367 aa).

The segment at 47-77 (DPRTAPPPQPSSAPSPPPQIHAPPGQLPHPH) is disordered. A compositionally biased stretch (pro residues) spans 50 to 73 (TAPPPQPSSAPSPPPQIHAPPGQL). Active-site residues include His164 and Cys220.

The protein belongs to the peptidase C14B family. In terms of assembly, interacts (via N-terminus) with LSD1. Proteolytically processed; by an autocatalytic mechanism.

Functionally, cysteine protease that cleaves specifically after arginine or lysine residues. Does not cleave caspase-specific substrates. Acts as a positive regulator of cell death. Required for both oxidative stress cell death response and hypersensitive cell death response mediated by immune response. This Arabidopsis thaliana (Mouse-ear cress) protein is Metacaspase-1 (AMC1).